The primary structure comprises 310 residues: Tagatose-6-phosphate kinase (310 aa).

It belongs to the carbohydrate kinase PfkB family. LacC subfamily.

The enzyme catalyses D-tagatofuranose 6-phosphate + ATP = D-tagatofuranose 1,6-bisphosphate + ADP + H(+). The protein operates within carbohydrate metabolism; D-tagatose 6-phosphate degradation; D-glyceraldehyde 3-phosphate and glycerone phosphate from D-tagatose 6-phosphate: step 1/2. The sequence is that of Tagatose-6-phosphate kinase from Streptococcus agalactiae serotype V (strain ATCC BAA-611 / 2603 V/R).